Reading from the N-terminus, the 388-residue chain is Pepsin A-3 (388 aa).

A signal peptide spans 1-15 (MKWLLLLGLVALSEC). The propeptide at 16–62 (IMYKVPLIRKKSLRRTLSERGLLKDFLKKHNLNPARKYFPQWKAPTL) is activation peptide. The Peptidase A1 domain maps to 76 to 385 (YFGTIGIGTP…DRANNQVGLA (310 aa)). The active site involves Asp-94. Cystine bridges form between Cys-107–Cys-112 and Cys-268–Cys-272. Residue Asp-277 is part of the active site. A disulfide bond links Cys-311 and Cys-344.

The protein belongs to the peptidase A1 family.

It is found in the secreted. It catalyses the reaction Preferential cleavage: hydrophobic, preferably aromatic, residues in P1 and P1' positions. Cleaves 1-Phe-|-Val-2, 4-Gln-|-His-5, 13-Glu-|-Ala-14, 14-Ala-|-Leu-15, 15-Leu-|-Tyr-16, 16-Tyr-|-Leu-17, 23-Gly-|-Phe-24, 24-Phe-|-Phe-25 and 25-Phe-|-Tyr-26 bonds in the B chain of insulin.. Shows particularly broad specificity; although bonds involving phenylalanine and leucine are preferred, many others are also cleaved to some extent. This Homo sapiens (Human) protein is Pepsin A-3 (PGA3).